Reading from the N-terminus, the 74-residue chain is UPF0346 protein RBAM_019500 (74 aa).

It belongs to the UPF0346 family.

This is UPF0346 protein RBAM_019500 from Bacillus velezensis (strain DSM 23117 / BGSC 10A6 / LMG 26770 / FZB42) (Bacillus amyloliquefaciens subsp. plantarum).